We begin with the raw amino-acid sequence, 444 residues long: Homogentisate 1,2-dioxygenase (444 aa).

His-298 acts as the Proton acceptor in catalysis. Fe cation-binding residues include His-341 and Glu-347. Positions 356 and 377 each coordinate homogentisate. His-377 contributes to the Fe cation binding site.

Belongs to the homogentisate dioxygenase family. As to quaternary structure, hexamer; dimer of trimers. It depends on Fe cation as a cofactor.

It carries out the reaction homogentisate + O2 = 4-maleylacetoacetate + H(+). It functions in the pathway amino-acid degradation; L-phenylalanine degradation; acetoacetate and fumarate from L-phenylalanine: step 4/6. Functionally, involved in the catabolism of homogentisate (2,5-dihydroxyphenylacetate or 2,5-OH-PhAc), a central intermediate in the degradation of phenylalanine and tyrosine. Catalyzes the oxidative ring cleavage of the aromatic ring of homogentisate to yield maleylacetoacetate. The chain is Homogentisate 1,2-dioxygenase from Burkholderia ambifaria (strain ATCC BAA-244 / DSM 16087 / CCUG 44356 / LMG 19182 / AMMD) (Burkholderia cepacia (strain AMMD)).